The chain runs to 80 residues: Small membrane A-kinase anchor protein (80 aa).

Glycine 2 is lipidated: N-myristoyl glycine.

Belongs to the small membrane AKAP family. Post-translationally, may be palmitoylated at Cys-3.

Its subcellular location is the cell membrane. In terms of biological role, binds to type I regulatory subunits of protein kinase A and may anchor/target them to the plasma membrane. In Tetraodon nigroviridis (Spotted green pufferfish), this protein is Small membrane A-kinase anchor protein.